Consider the following 547-residue polypeptide: Chaperonin GroEL 1 (547 aa).

ATP is bound by residues 29-32 (TLGP), 86-90 (DGTTT), G418, 482-484 (NAA), and D498.

This sequence belongs to the chaperonin (HSP60) family. Forms a cylinder of 14 subunits composed of two heptameric rings stacked back-to-back. Interacts with the co-chaperonin GroES.

It is found in the cytoplasm. The enzyme catalyses ATP + H2O + a folded polypeptide = ADP + phosphate + an unfolded polypeptide.. In terms of biological role, together with its co-chaperonin GroES, plays an essential role in assisting protein folding. The GroEL-GroES system forms a nano-cage that allows encapsulation of the non-native substrate proteins and provides a physical environment optimized to promote and accelerate protein folding. This Corynebacterium jeikeium (strain K411) protein is Chaperonin GroEL 1.